Here is a 220-residue protein sequence, read N- to C-terminus: Uracil-DNA glycosylase (220 aa).

The active-site Proton acceptor is the aspartate 61.

Belongs to the uracil-DNA glycosylase (UDG) superfamily. UNG family.

It is found in the cytoplasm. It carries out the reaction Hydrolyzes single-stranded DNA or mismatched double-stranded DNA and polynucleotides, releasing free uracil.. In terms of biological role, excises uracil residues from the DNA which can arise as a result of misincorporation of dUMP residues by DNA polymerase or due to deamination of cytosine. This is Uracil-DNA glycosylase from Glaesserella parasuis serovar 5 (strain SH0165) (Haemophilus parasuis).